The chain runs to 239 residues: Probable intron-encoded endonuclease I-ZbiI (239 aa).

The protein belongs to the LAGLIDADG endonuclease family.

It localises to the mitochondrion. Endonuclease involved in mitochondrial 21S rRNA gene intron homing. The chain is Probable intron-encoded endonuclease I-ZbiI from Zygosaccharomyces bisporus.